The chain runs to 288 residues: tRNA (guanine-N(1)-)-methyltransferase (288 aa).

Residues 82-105 (ATDAVDTSDPGDSAAPDSSAPSGA) form a disordered region. Residues 89–105 (SDPGDSAAPDSSAPSGA) are compositionally biased toward low complexity. S-adenosyl-L-methionine is bound by residues Gly-137 and 162–167 (IGDYVL).

This sequence belongs to the RNA methyltransferase TrmD family. Homodimer.

The protein localises to the cytoplasm. It carries out the reaction guanosine(37) in tRNA + S-adenosyl-L-methionine = N(1)-methylguanosine(37) in tRNA + S-adenosyl-L-homocysteine + H(+). Specifically methylates guanosine-37 in various tRNAs. The protein is tRNA (guanine-N(1)-)-methyltransferase of Bifidobacterium longum (strain DJO10A).